Reading from the N-terminus, the 283-residue chain is MSESQPPRRGRFPLPLSATTPVVRRFVSTGQAVLQPVPPRPQRPASEITRETARPAILAGHGLDSDGFRARMIERLRADGCRDEHVLRAMSRVPRHLFVDSALAAQAYEDTSLPIGHGQTISKPSVVARMLGLLRQRPGGAQLGRVLEIGTGCGYQAAVLCRLASQVYSIERLKALHDRARENLAPMRRDQLRLIYGDGLHGHGPNAPFDAIIAAAGGHAIPQAWLDQLAVCGRLVAPMHDAQRGTQVLVVVDRMPDGSLVQHRHETVRFVPLESGTSDYKPA.

Residue Ser-122 is part of the active site.

The protein belongs to the methyltransferase superfamily. L-isoaspartyl/D-aspartyl protein methyltransferase family.

It localises to the cytoplasm. It carries out the reaction [protein]-L-isoaspartate + S-adenosyl-L-methionine = [protein]-L-isoaspartate alpha-methyl ester + S-adenosyl-L-homocysteine. Its function is as follows. Catalyzes the methyl esterification of L-isoaspartyl residues in peptides and proteins that result from spontaneous decomposition of normal L-aspartyl and L-asparaginyl residues. It plays a role in the repair and/or degradation of damaged proteins. This chain is Protein-L-isoaspartate O-methyltransferase, found in Leptothrix cholodnii (strain ATCC 51168 / LMG 8142 / SP-6) (Leptothrix discophora (strain SP-6)).